Consider the following 876-residue polypeptide: Alanine--tRNA ligase (876 aa).

Zn(2+) is bound by residues histidine 564, histidine 568, cysteine 666, and histidine 670.

The protein belongs to the class-II aminoacyl-tRNA synthetase family. As to quaternary structure, homotetramer. It depends on Zn(2+) as a cofactor.

It localises to the cytoplasm. The enzyme catalyses tRNA(Ala) + L-alanine + ATP = L-alanyl-tRNA(Ala) + AMP + diphosphate. In terms of biological role, catalyzes the attachment of alanine to tRNA(Ala) in a two-step reaction: alanine is first activated by ATP to form Ala-AMP and then transferred to the acceptor end of tRNA(Ala). Also edits incorrectly charged Ser-tRNA(Ala) and Gly-tRNA(Ala) via its editing domain. The chain is Alanine--tRNA ligase from Salmonella typhi.